The sequence spans 180 residues: uncharacterized protein (180 aa).

Residues 1–30 (MRHKIITFILAVVVIIIIGNMIGGGGGSEA) form the signal peptide. The segment at 25 to 46 (GGGSEATSKTSSSSKAETEKTY) is disordered. Positions 29-39 (EATSKTSSSSK) are enriched in low complexity.

It is found in the secreted. This is an uncharacterized protein from Bacillus subtilis (strain 168).